The chain runs to 76 residues: uncharacterized protein (76 aa).

This sequence to K.pneumoniae LtrA, E.coli YjiE, and YhcS.

This is an uncharacterized protein from Escherichia coli O6:H1 (strain CFT073 / ATCC 700928 / UPEC).